Consider the following 56-residue polypeptide: ComX pheromone (56 aa).

Positions 1–50 (MMQDLINYFLSYPEVLKKLKNREACLIGFSSNETETIIKAYNDYHLSSPT) are excised as a propeptide. Tryptophan derivative is present on tryptophan 54. The 3'-farnesyl-2',N2-cyclotryptophan moiety is linked to residue tryptophan 54.

As to quaternary structure, interacts directly with the sensor histidine kinase ComP and stimulates its activity. Trp-54 is modified by farnesylation, which is essential for activity. Modified by the tryptophan prenyltransferase ComQ before export to the extracellular environment. The type of isoprenyl derivative differs among the different pherotypes and depends on ComX primary sequence.

Its subcellular location is the secreted. Its function is as follows. Part of a major quorum-sensing system that regulates the development of genetic competence. Acts through the activation of the two-component regulatory system ComP/ComA composed of a sensor histidine kinase, ComP, and a response regulator, ComA. This is ComX pheromone from Bacillus mojavensis.